A 470-amino-acid polypeptide reads, in one-letter code: 6-phospho-beta-galactosidase 1 (470 aa).

Residues Gln23, His120, Asn163, Glu164, and Asn300 each contribute to the D-galactose 6-phosphate site. Residue Glu164 is the Proton donor of the active site. The Nucleophile role is filled by Glu378. D-galactose 6-phosphate-binding residues include Ser434, Trp435, Lys441, and Tyr443.

It belongs to the glycosyl hydrolase 1 family.

The catalysed reaction is a 6-phospho-beta-D-galactoside + H2O = D-galactose 6-phosphate + an alcohol. It participates in carbohydrate metabolism; lactose degradation; D-galactose 6-phosphate and beta-D-glucose from lactose 6-phosphate: step 1/1. This chain is 6-phospho-beta-galactosidase 1, found in Streptococcus pneumoniae serotype 4 (strain ATCC BAA-334 / TIGR4).